The primary structure comprises 353 residues: MKQNKKLLVMAGGTGGHVFPGLAVAKKLQQQGWEIRWLGTADRMEADLVPKHGIEIDFIKVKGLRGQGVSKLIKAPFQIINAILQARRHIKAWQPDVVLGMGGYVSGPGGIAAWLSGIPVVLHEQNAVAGLTNQWLSKIAKKVFQAFPGAFPTAEVVGNPVREDVVALADPEQRMAERDGDIRILVMGGSQGAKILNDTLPVTMAQLGEGFTVVHQAGKNNQQQVIEQYKSHSVDNVQVTEFIDDVAQAYEWADLLVCRSGALTVSEVSAAGVGSIFVPFMHKDRQQALNADHLVECGAALMIEQPQLTADKLANTIAQLDRNELKMMATKARQAAKLDADVTVAEAIKALAK.

UDP-N-acetyl-alpha-D-glucosamine contacts are provided by residues 14-16 (TGG), N126, R162, S190, I243, 262-267 (ALTVSE), and Q287.

It belongs to the glycosyltransferase 28 family. MurG subfamily.

It is found in the cell inner membrane. The catalysed reaction is di-trans,octa-cis-undecaprenyl diphospho-N-acetyl-alpha-D-muramoyl-L-alanyl-D-glutamyl-meso-2,6-diaminopimeloyl-D-alanyl-D-alanine + UDP-N-acetyl-alpha-D-glucosamine = di-trans,octa-cis-undecaprenyl diphospho-[N-acetyl-alpha-D-glucosaminyl-(1-&gt;4)]-N-acetyl-alpha-D-muramoyl-L-alanyl-D-glutamyl-meso-2,6-diaminopimeloyl-D-alanyl-D-alanine + UDP + H(+). Its pathway is cell wall biogenesis; peptidoglycan biosynthesis. Functionally, cell wall formation. Catalyzes the transfer of a GlcNAc subunit on undecaprenyl-pyrophosphoryl-MurNAc-pentapeptide (lipid intermediate I) to form undecaprenyl-pyrophosphoryl-MurNAc-(pentapeptide)GlcNAc (lipid intermediate II). This chain is UDP-N-acetylglucosamine--N-acetylmuramyl-(pentapeptide) pyrophosphoryl-undecaprenol N-acetylglucosamine transferase, found in Vibrio atlanticus (strain LGP32) (Vibrio splendidus (strain Mel32)).